Here is a 768-residue protein sequence, read N- to C-terminus: Protein transport protein Sec23A (768 aa).

An N-acetylthreonine modification is found at Thr2. Zn(2+) is bound by residues Cys61, Cys66, Cys85, and Cys88. Phosphothreonine is present on Thr308. The Gelsolin-like repeat unit spans residues Pro632–Leu718.

It belongs to the SEC23/SEC24 family. SEC23 subfamily. COPII is composed of at least five proteins: the Sec23/24 complex, the Sec13/31 complex and Sar1. Interacts with SEC23IP. Interacts with HTR4. Interacts with SEC16A. Interacts with SLC6A4. Interacts (as part of the Sec23/24 complex) with SEC22B; recruits SEC22B into COPII-coated vesicles and allows the transport of this cargo from the endoplasmic reticulum to the Golgi. Interacts (via Gelsolin-like repeat) with MIA2 and MIA3; specifically involved in the transport of large cargos like the collagen COL7A1. Interacts with DDHD1. Interacts with TMEM39A. Interacts with SACM1L; this interaction is reduced in the absence of TMEM39A. Interacts with kinase FAM20C; transport of FAM20C from the endoplasmic reticulum to the Golgi is likely to be mediated by COPII vesicles.

It is found in the cytoplasmic vesicle. The protein localises to the COPII-coated vesicle membrane. Its subcellular location is the endoplasmic reticulum membrane. It localises to the cytoplasm. The protein resides in the cytosol. Component of the coat protein complex II (COPII) which promotes the formation of transport vesicles from the endoplasmic reticulum (ER). The coat has two main functions, the physical deformation of the endoplasmic reticulum membrane into vesicles and the selection of cargo molecules for their transport to the Golgi complex. Required for the translocation of insulin-induced glucose transporter SLC2A4/GLUT4 to the cell membrane. The sequence is that of Protein transport protein Sec23A from Bos taurus (Bovine).